The chain runs to 203 residues: UPF0637 protein Sca_0732 (203 aa).

It belongs to the UPF0637 family.

In Staphylococcus carnosus (strain TM300), this protein is UPF0637 protein Sca_0732.